Consider the following 94-residue polypeptide: Large ribosomal subunit protein uL22 (94 aa).

This sequence belongs to the universal ribosomal protein uL22 family. As to quaternary structure, part of the 50S ribosomal subunit.

In terms of biological role, this protein binds specifically to 23S rRNA; its binding is stimulated by other ribosomal proteins, e.g. L4, L17, and L20. It is important during the early stages of 50S assembly. It makes multiple contacts with different domains of the 23S rRNA in the assembled 50S subunit and ribosome. The globular domain of the protein is located near the polypeptide exit tunnel on the outside of the subunit, while an extended beta-hairpin is found that lines the wall of the exit tunnel in the center of the 70S ribosome. The protein is Large ribosomal subunit protein uL22 (rplV) of Tomato big bud phytoplasma.